A 317-amino-acid chain; its full sequence is Beta-ketoacyl-[acyl-carrier-protein] synthase III (317 aa).

Active-site residues include Cys-112 and His-244. Residues 245–249 (QANLR) form an ACP-binding region. Asn-274 is an active-site residue.

It belongs to the thiolase-like superfamily. FabH family. In terms of assembly, homodimer.

It is found in the cytoplasm. It catalyses the reaction malonyl-[ACP] + acetyl-CoA + H(+) = 3-oxobutanoyl-[ACP] + CO2 + CoA. It participates in lipid metabolism; fatty acid biosynthesis. Catalyzes the condensation reaction of fatty acid synthesis by the addition to an acyl acceptor of two carbons from malonyl-ACP. Catalyzes the first condensation reaction which initiates fatty acid synthesis and may therefore play a role in governing the total rate of fatty acid production. Possesses both acetoacetyl-ACP synthase and acetyl transacylase activities. Its substrate specificity determines the biosynthesis of branched-chain and/or straight-chain of fatty acids. The polypeptide is Beta-ketoacyl-[acyl-carrier-protein] synthase III (Salmonella typhi).